A 291-amino-acid polypeptide reads, in one-letter code: MPITNASPENILRYLHAAGTGTKEAMKSATSPRGILEWFVNFFTCGGVRRSNERWFREVIGKLTTSLLYVNKNAFFDGNKIFLEDVNGCTICLSCGAASENTDPMVIIEVNKNGKTVTDKVDSERFWNVCRMLKLMSKHNIQQPDSLITEDGFLNLRGVNLAHKDFQGEDLSKIDASNADFRETTLSNVNLVGANLCCANLHAVNLMGSNMTKANLTHADLTCANMSGVNLTAAILFGSDLTDTKLNGAKLDKIALTLAKALTGADLTGSQHTPTPLPDYNDRTLFPHPIF.

Pentapeptide repeat domains are found at residues 154–193 and 199–238; these read LNLR…NLVG and ANLH…ILFG.

The protein resides in the secreted. It localises to the host membrane. Effector proteins function to alter host cell physiology and promote bacterial survival in host tissues. Does not appear to be required for the formation or the maintenance of either Salmonella-containing vacuole (SCV) or the Salmonella-induced filaments (Sifs). Not required for intracellular replication in phagocytic cells. The sequence is that of Secreted effector protein PipB (pipB) from Salmonella typhimurium (strain LT2 / SGSC1412 / ATCC 700720).